The primary structure comprises 255 residues: uncharacterized protein (255 aa).

The Microbody targeting signal signature appears at 253-255 (SKI).

This sequence belongs to the enoyl-CoA hydratase/isomerase family.

Its subcellular location is the peroxisome. This is an uncharacterized protein from Caenorhabditis elegans.